The chain runs to 393 residues: Riboflavin biosynthesis protein RibBA (393 aa).

Positions 1–200 (MQLDSIDTAL…IEDLEKYRKS (200 aa)) are DHBP synthase. D-ribulose 5-phosphate-binding positions include 27–28 (RE), D32, 139–143 (RRGHT), and E163. E28 serves as a coordination point for Mg(2+). Residue H142 participates in Mg(2+) binding. The GTP cyclohydrolase II stretch occupies residues 201 to 393 (SISKLDAKAK…TKKEKMGHLI (193 aa)). Position 249–253 (249–253 (RIHSA)) interacts with GTP. Residues C254, C265, and C267 each coordinate Zn(2+). GTP contacts are provided by residues Q270, 291–293 (EGR), and T313. Residue D325 is the Proton acceptor; for GTP cyclohydrolase activity of the active site. Residue R327 is the Nucleophile; for GTP cyclohydrolase activity of the active site. The GTP site is built by S348 and K353.

The protein in the N-terminal section; belongs to the DHBP synthase family. It in the C-terminal section; belongs to the GTP cyclohydrolase II family. Mg(2+) is required as a cofactor. Requires Mn(2+) as cofactor. The cofactor is Zn(2+).

The catalysed reaction is D-ribulose 5-phosphate = (2S)-2-hydroxy-3-oxobutyl phosphate + formate + H(+). The enzyme catalyses GTP + 4 H2O = 2,5-diamino-6-hydroxy-4-(5-phosphoribosylamino)-pyrimidine + formate + 2 phosphate + 3 H(+). The protein operates within cofactor biosynthesis; riboflavin biosynthesis; 2-hydroxy-3-oxobutyl phosphate from D-ribulose 5-phosphate: step 1/1. It functions in the pathway cofactor biosynthesis; riboflavin biosynthesis; 5-amino-6-(D-ribitylamino)uracil from GTP: step 1/4. Catalyzes the conversion of D-ribulose 5-phosphate to formate and 3,4-dihydroxy-2-butanone 4-phosphate. Its function is as follows. Catalyzes the conversion of GTP to 2,5-diamino-6-ribosylamino-4(3H)-pyrimidinone 5'-phosphate (DARP), formate and pyrophosphate. The sequence is that of Riboflavin biosynthesis protein RibBA from Staphylococcus saprophyticus subsp. saprophyticus (strain ATCC 15305 / DSM 20229 / NCIMB 8711 / NCTC 7292 / S-41).